Consider the following 611-residue polypeptide: Zinc metalloproteinase nas-31 (611 aa).

The N-terminal stretch at 1-17 is a signal peptide; that stretch reads MILQLLFYSLFTHLAVS. The propeptide occupies 18–158; the sequence is QIDVNQALNQ…TVSTASRARR (141 aa). N53 and N67 each carry an N-linked (GlcNAc...) asparagine glycan. Residues 82–95 are compositionally biased toward polar residues; sequence NAGTNQENGATEQQ. The disordered stretch occupies residues 82-103; that stretch reads NAGTNQENGATEQQKPLREKPR. The region spanning 159-354 is the Peptidase M12A domain; sequence QAYRDRYYPS…SMMNEHYKCK (196 aa). N200 carries N-linked (GlcNAc...) asparagine glycosylation. Intrachain disulfides connect C203/C353, C224/C243, C357/C376, C379/C390, C397/C428, C455/C476, C532/C564, C539/C557, and C548/C561. H251 contributes to the Zn(2+) binding site. The active site involves E252. Positions 255 and 261 each coordinate Zn(2+). An EGF-like domain is found at 340 to 396; sequence GFYDISMMNEHYKCKELCPAASSAQCKNGGFPSPRNCAICICPSGYGGILCDQRPPG. In terms of domain architecture, CUB spans 397 to 516; sequence CGDSVTATTT…LEYRAVTPSV (120 aa). An N-linked (GlcNAc...) asparagine glycan is attached at N424. One can recognise a ShKT domain in the interval 532–564; sequence CQDLHPNCDFYKFFGMCRSKKIRSNCKFTCHDC.

Zn(2+) is required as a cofactor. Expressed in excretory cell and in amphid and phasmid sheath glia.

It is found in the secreted. Its function is as follows. Metalloprotease. In Caenorhabditis elegans, this protein is Zinc metalloproteinase nas-31 (nas-31).